The primary structure comprises 357 residues: Peptide chain release factor 1 (357 aa).

Gln-233 carries the N5-methylglutamine modification.

Belongs to the prokaryotic/mitochondrial release factor family. Methylated by PrmC. Methylation increases the termination efficiency of RF1.

The protein localises to the cytoplasm. In terms of biological role, peptide chain release factor 1 directs the termination of translation in response to the peptide chain termination codons UAG and UAA. This chain is Peptide chain release factor 1, found in Enterococcus faecalis (strain ATCC 700802 / V583).